We begin with the raw amino-acid sequence, 224 residues long: Ribonuclease 3 (224 aa).

Residues 4–127 (IEKLEQSLTY…IIGAIHLEAG (124 aa)) form the RNase III domain. E40 is a Mg(2+) binding site. D44 is a catalytic residue. D113 and E116 together coordinate Mg(2+). E116 is a catalytic residue. One can recognise a DRBM domain in the interval 154–223 (DYKTKLQEIT…AKIALEKLGA (70 aa)).

The protein belongs to the ribonuclease III family. As to quaternary structure, homodimer. Mg(2+) serves as cofactor.

Its subcellular location is the cytoplasm. It carries out the reaction Endonucleolytic cleavage to 5'-phosphomonoester.. Its function is as follows. Digests double-stranded RNA. Involved in the processing of primary rRNA transcript to yield the immediate precursors to the large and small rRNAs (23S and 16S). Also processes some mRNAs, and tRNAs when they are encoded in the rRNA operon. In terms of biological role, CRISPR (clustered regularly interspaced short palindromic repeat) is an adaptive immune system that provides protection against mobile genetic elements (viruses, transposable elements and conjugative plasmids). CRISPR clusters contain spacers, sequences complementary to antecedent mobile elements, and target invading nucleic acids. CRISPR clusters are transcribed and processed into CRISPR RNA (crRNA). In this organism endogenous ribonuclease 3 and Cas9 are required for correct coprocessing of pre-crRNA and the trans-encoded small RNA (tracrRNA). Cas9, crRNA and tracrRNA are required for cleavage of invading DNA. Complements pre-crRNA and tracrRNA coprocessing defects in an rnc deletion in S.pyogenes strain 370. The chain is Ribonuclease 3 from Campylobacter jejuni subsp. jejuni serotype O:2 (strain ATCC 700819 / NCTC 11168).